Here is a 679-residue protein sequence, read N- to C-terminus: Glycine--tRNA ligase beta subunit (679 aa).

The protein belongs to the class-II aminoacyl-tRNA synthetase family. Tetramer of two alpha and two beta subunits.

The protein resides in the cytoplasm. It carries out the reaction tRNA(Gly) + glycine + ATP = glycyl-tRNA(Gly) + AMP + diphosphate. The polypeptide is Glycine--tRNA ligase beta subunit (Streptococcus uberis (strain ATCC BAA-854 / 0140J)).